The following is a 294-amino-acid chain: Xyloglucan endotransglucosylase protein 34 (294 aa).

The N-terminal stretch at 1-22 (MAAAYPWTLFLGMLVMVSGTMG) is a signal peptide. Residues 23-221 (AALRKPVDVA…WSKAPFIASY (199 aa)) form the GH16 domain. Catalysis depends on Glu107, which acts as the Nucleophile. Glu111 acts as the Proton donor in catalysis. A xyloglucan-binding site is contributed by Glu111. The N-linked (GlcNAc...) asparagine glycan is linked to Asn115. Xyloglucan contacts are provided by residues 124 to 126 (QTN), 134 to 136 (DRE), 200 to 201 (DW), and Gly205. 2 disulfides stabilise this stretch: Cys229-Cys238 and Cys275-Cys288. Arg280 provides a ligand contact to xyloglucan.

It belongs to the glycosyl hydrolase 16 family. XTH group 1 subfamily. Post-translationally, contains at least one intrachain disulfide bond essential for its enzymatic activity. N-glycosylated. Contains N-acetylglucosamine and mannose. Glycosylation is not essential for its catalytic activity. As to expression, expressed in mature gelatinous (G) cell wall layer of the tension wood fibers. Highly expressed in the outer zone of the G layer close to the secondary S2 layer. Not expressed in the mature walls of the ray cells or vessel elements (at protein level). Highest expression in both the phloem/cambium and differentiating xylem of the mature stem containing primarily secondary cell wall forming cells, in root tips and young roots. Expressed at low levels in apical bud.

The protein resides in the secreted. It is found in the cell wall. The protein localises to the extracellular space. Its subcellular location is the apoplast. It localises to the cytoplasm. The catalysed reaction is breaks a beta-(1-&gt;4) bond in the backbone of a xyloglucan and transfers the xyloglucanyl segment on to O-4 of the non-reducing terminal glucose residue of an acceptor, which can be a xyloglucan or an oligosaccharide of xyloglucan.. Functionally, catalyzes xyloglucan endotransglycosylation (XET). Cleaves and religates xyloglucan polymers. Does not catalyze xyloglucan endohydrolysis (XEH). Involved in early phases of secondary (S) cell wall formation in fibers of the xylem and phloem vascular tissues of wood stems. May play a role in restructuring primary cell walls, possibly creating and reinforcing the connections between the primary and S cell wall layers. Functions in the gelatinous (G) layers of the tension wood fibers that are involved in bending of the wood stems. May play a role in G fiber shrinking by repairing broken xyloglucan cross-links between G and S2 cell wall layers via its XET activity to maintain connections between the layers. The sequence is that of Xyloglucan endotransglucosylase protein 34 from Populus tremula x Populus tremuloides (Hybrid aspen).